We begin with the raw amino-acid sequence, 637 residues long: MIYHFTEEYDIIVIGAGHAGVEASLAASRMGCKVLLATINIEMLAFMPCNPSIGGSAKGIVVREVDALGGEMAKTIDKTYIQMKMLNTGKGPAVRALRAQADKELYSKEMRKTVENQENLTLRQTMIDEILVEDGKAVGVRTATHQEYAAKAVIVTTGTALRGEIIIGDLKYSSGPNHSLASINLADNLKELGLEIGRFKTGTPPRVKASSINYDVTEIQPGDEVPNHFSYTSRDEDYVKDQVPCWLTYTNGTSHEIIQNNLHRAPMFTGVVKGVGPRYCPSIEDKIVRFADKERHQLFLEPEGRNTEEVYVQGLSTSLPEDVQRDLVHSIKGLENAEMMRTGYAIEYDMVLPHQLRATLETKKISGLFTAGQTNGTSGYEEAAGQGIIAGINAALKIQGKPELILKRSDGYIGVMIDDLVTKGTIEPYRLLTSRAEYRLILRHDNADMRLTEMGREIGLVDDERWARFEIKKNQFDNEMKRLDSIKLKPVKETNAKVEEMGFKPLTDAVTAKEFLRRPEVSYQDVVAFIGPAAEELDDKIIELIETEIKYEGYISKAMDQVAKMKRMEEKRIPANIDWDDIDSIATEARQKFKLINPETIGQASRISGVNPADISILMVYLEGKNRSISKTLQKSK.

Residues 15–20, I127, and S182 contribute to the FAD site; that span reads GAGHAG. An NAD(+)-binding site is contributed by 276–290; that stretch reads GPRYCPSIEDKIVRF. Residue Q373 participates in FAD binding.

This sequence belongs to the MnmG family. In terms of assembly, homodimer. Heterotetramer of two MnmE and two MnmG subunits. Requires FAD as cofactor.

It is found in the cytoplasm. In terms of biological role, NAD-binding protein involved in the addition of a carboxymethylaminomethyl (cmnm) group at the wobble position (U34) of certain tRNAs, forming tRNA-cmnm(5)s(2)U34. The sequence is that of tRNA uridine 5-carboxymethylaminomethyl modification enzyme MnmG from Streptococcus pneumoniae (strain ATCC BAA-255 / R6).